The sequence spans 670 residues: Soluble lamin-associated protein of 75 kDa (670 aa).

Disordered regions lie at residues 273–301 (PKRP…SSEM) and 314–670 (STSE…AKLT). Ser-350 carries the phosphoserine modification. The span at 358–375 (SQTSLTASINKLESTARP) shows a compositional bias: polar residues. Acidic residues predominate over residues 378–387 (SSEEFLEEEP). Position 379 is a phosphoserine (Ser-379). A compositionally biased stretch (basic and acidic residues) spans 414 to 423 (EKQDGEKESE). Positions 442–453 (TEEEDSTSEVLD) are enriched in acidic residues. Ser-449 is subject to Phosphoserine. Residues 460–470 (PFNSSEDSTNL) are compositionally biased toward polar residues. 2 stretches are compositionally biased toward basic and acidic residues: residues 479 to 494 (KPPE…RIPD) and 504 to 514 (SDEKGHMEEKL). Ser-515 carries the post-translational modification Phosphoserine. Polar residues-rich tracts occupy residues 558 to 569 (ENLSPNTTSSLE) and 579 to 591 (PQET…QSSL). A phosphoserine mark is found at Ser-615, Ser-618, and Ser-635. Basic residues predominate over residues 651–670 (NLRRKAKGHKGPAKKKAKLT).

This sequence belongs to the FAM169 family.

The protein resides in the nucleus envelope. Its subcellular location is the nucleus inner membrane. In Homo sapiens (Human), this protein is Soluble lamin-associated protein of 75 kDa (FAM169A).